The sequence spans 195 residues: NADH dehydrogenase [ubiquinone] iron-sulfur protein 3 (195 aa).

The protein belongs to the complex I 30 kDa subunit family. In terms of assembly, complex I is composed of about 45 different subunits. This is a component of the iron-sulfur (IP) fragment of the enzyme.

The protein localises to the mitochondrion inner membrane. It catalyses the reaction a ubiquinone + NADH + 5 H(+)(in) = a ubiquinol + NAD(+) + 4 H(+)(out). Core subunit of the mitochondrial membrane respiratory chain NADH dehydrogenase (Complex I) that is believed to belong to the minimal assembly required for catalysis. Complex I functions in the transfer of electrons from NADH to the respiratory chain. The immediate electron acceptor for the enzyme is believed to be ubiquinone. In Marchantia polymorpha (Common liverwort), this protein is NADH dehydrogenase [ubiquinone] iron-sulfur protein 3 (NAD9).